We begin with the raw amino-acid sequence, 250 residues long: AA9 family lytic polysaccharide monooxygenase F (250 aa).

The first 18 residues, 1–18 (MHLKTFSNLLVFVATVAA), serve as a signal peptide directing secretion. A Cu(2+)-binding site is contributed by His19. N-linked (GlcNAc...) asparagine glycans are attached at residues Asn24 and Asn85. 2 disulfides stabilise this stretch: Cys70-Cys199 and Cys169-Cys250. His108 is a Cu(2+) binding site. A glycan (N-linked (GlcNAc...) asparagine) is linked at Asn146. His185 and Gln194 together coordinate O2. Tyr196 contacts Cu(2+).

The protein belongs to the polysaccharide monooxygenase AA9 family. Cu(2+) is required as a cofactor.

It localises to the secreted. The enzyme catalyses [(1-&gt;4)-beta-D-glucosyl]n+m + reduced acceptor + O2 = 4-dehydro-beta-D-glucosyl-[(1-&gt;4)-beta-D-glucosyl]n-1 + [(1-&gt;4)-beta-D-glucosyl]m + acceptor + H2O.. Lytic polysaccharide monooxygenase (LPMO) that depolymerizes crystalline and amorphous polysaccharides via the oxidation of scissile alpha- or beta-(1-4)-glycosidic bonds, yielding C1 and C4 oxidation products. Catalysis by LPMOs requires the reduction of the active-site copper from Cu(II) to Cu(I) by a reducing agent and H(2)O(2) or O(2) as a cosubstrate. This is AA9 family lytic polysaccharide monooxygenase F from Botryotinia fuckeliana (strain B05.10) (Noble rot fungus).